An 82-amino-acid polypeptide reads, in one-letter code: Phosphoribosylformylglycinamidine synthase subunit PurS (82 aa).

This sequence belongs to the PurS family. Homodimer. Part of the FGAM synthase complex composed of 1 PurL, 1 PurQ and 2 PurS subunits.

It is found in the cytoplasm. It carries out the reaction N(2)-formyl-N(1)-(5-phospho-beta-D-ribosyl)glycinamide + L-glutamine + ATP + H2O = 2-formamido-N(1)-(5-O-phospho-beta-D-ribosyl)acetamidine + L-glutamate + ADP + phosphate + H(+). It participates in purine metabolism; IMP biosynthesis via de novo pathway; 5-amino-1-(5-phospho-D-ribosyl)imidazole from N(2)-formyl-N(1)-(5-phospho-D-ribosyl)glycinamide: step 1/2. Part of the phosphoribosylformylglycinamidine synthase complex involved in the purines biosynthetic pathway. Catalyzes the ATP-dependent conversion of formylglycinamide ribonucleotide (FGAR) and glutamine to yield formylglycinamidine ribonucleotide (FGAM) and glutamate. The FGAM synthase complex is composed of three subunits. PurQ produces an ammonia molecule by converting glutamine to glutamate. PurL transfers the ammonia molecule to FGAR to form FGAM in an ATP-dependent manner. PurS interacts with PurQ and PurL and is thought to assist in the transfer of the ammonia molecule from PurQ to PurL. The polypeptide is Phosphoribosylformylglycinamidine synthase subunit PurS (Thermotoga maritima (strain ATCC 43589 / DSM 3109 / JCM 10099 / NBRC 100826 / MSB8)).